We begin with the raw amino-acid sequence, 149 residues long: 3-dehydroquinate dehydratase (149 aa).

The active-site Proton acceptor is the Tyr26. The substrate site is built by Asn77, His83, and Asp90. His103 functions as the Proton donor in the catalytic mechanism. Residues 104–105 and Arg114 each bind substrate; that span reads LS.

Belongs to the type-II 3-dehydroquinase family. As to quaternary structure, homododecamer.

The catalysed reaction is 3-dehydroquinate = 3-dehydroshikimate + H2O. It functions in the pathway metabolic intermediate biosynthesis; chorismate biosynthesis; chorismate from D-erythrose 4-phosphate and phosphoenolpyruvate: step 3/7. In terms of biological role, catalyzes a trans-dehydration via an enolate intermediate. This chain is 3-dehydroquinate dehydratase, found in Vibrio vulnificus (strain YJ016).